Consider the following 798-residue polypeptide: Bromodomain-containing protein 2 (798 aa).

At M1 the chain carries N-acetylmethionine. The tract at residues M1 to L21 is disordered. The residue at position 6 (T6) is a Phosphothreonine. A Phosphoserine modification is found at S36. The interval L53–G72 is disordered. The region spanning R73 to M179 is the Bromo 1 domain. The a protein site is built by D111, Y154, N155, K156, D159, and D160. 3 disordered regions span residues P267–Q348, E455–L648, and E735–G798. The segment covering T284 to S297 has biased composition (low complexity). Phosphoserine occurs at positions 297, 300, and 304. Positions M315–P331 are enriched in basic and acidic residues. The Bromo 2 domain maps to G343–M452. Residues S480–E512 are compositionally biased toward acidic residues. The span at K542 to R564 shows a compositional bias: basic residues. The Nuclear localization signal motif lies at K553–K557. Positions D630–P712 constitute an NET domain. A Phosphoserine modification is found at S631. Basic and acidic residues predominate over residues S637–L648. Positions S772–T792 are enriched in low complexity.

Belongs to the BET family. As to quaternary structure, homodimer. Interacts with E2F1. Interacts with (acetylated) STAT3; promoting STAT3 recruitment to chromatin. Interacts with CTCF; promoting BRD2 recruitment to chromatin.

Its subcellular location is the nucleus. The protein localises to the chromosome. Chromatin reader protein that specifically recognizes and binds histone H4 acetylated at 'Lys-5' and 'Lys-12' (H4K5ac and H4K12ac, respectively), thereby controlling gene expression and remodeling chromatin structures. Recruits transcription factors and coactivators to target gene sites, and activates RNA polymerase II machinery for transcriptional elongation. Plays a key role in genome compartmentalization via its association with CTCF and cohesin: recruited to chromatin by CTCF and promotes formation of topologically associating domains (TADs) via its ability to bind acetylated histones, contributing to CTCF boundary formation and enhancer insulation. Also recognizes and binds acetylated non-histone proteins, such as STAT3. Involved in inflammatory response by regulating differentiation of naive CD4(+) T-cells into T-helper Th17: recognizes and binds STAT3 acetylated at 'Lys-87', promoting STAT3 recruitment to chromatin. In addition to acetylated lysines, also recognizes and binds lysine residues on histones that are both methylated and acetylated on the same side chain to form N6-acetyl-N6-methyllysine (Kacme), an epigenetic mark of active chromatin associated with increased transcriptional initiation. Specifically binds histone H4 acetyl-methylated at 'Lys-5' and 'Lys-12' (H4K5acme and H4K12acme, respectively). This is Bromodomain-containing protein 2 (Brd2) from Rattus norvegicus (Rat).